The chain runs to 266 residues: Small ribosomal subunit protein eS1 (266 aa).

The tract at residues glycine 235 to valine 266 is disordered. Residues serine 244 to glycine 257 show a composition bias toward basic and acidic residues.

It belongs to the eukaryotic ribosomal protein eS1 family. In terms of assembly, component of the small ribosomal subunit. Mature ribosomes consist of a small (40S) and a large (60S) subunit. The 40S subunit contains about 33 different proteins and 1 molecule of RNA (18S). The 60S subunit contains about 49 different proteins and 3 molecules of RNA (28S, 5.8S and 5S).

Its subcellular location is the cytoplasm. Its function is as follows. Component of the small ribosomal subunit. The ribosome is a large ribonucleoprotein complex responsible for the synthesis of proteins in the cell. This Oryzias latipes (Japanese rice fish) protein is Small ribosomal subunit protein eS1 (rps3a).